We begin with the raw amino-acid sequence, 132 residues long: Pre-histone-like nucleoprotein (132 aa).

Positions 2–23 (AILISPSNNTGWGLGTHKLFGG) are excised as a propeptide. The Nuclear localization signal motif lies at 124–132 (RRKRRVRSK).

The protein belongs to the adenoviridae histone-like nucleoprotein family. As to quaternary structure, interacts with the core-capsid bridging protein; this interaction bridges the virus core to the capsid. Interacts with host NPM1; this interaction might play a role in placing the pre-histone-like nucleoprotein on the viral DNA or regulating viral gene expression. Interacts with host HMGB1; this interaction inhibits host immune response. In terms of processing, cleaved near the N-terminus by the viral protease during virion maturation to form the mature protein.

Its subcellular location is the virion. It localises to the host nucleus. The protein resides in the host nucleolus. Its function is as follows. Plays a role in the inhibition of host immune response within the nucleus. Interacts with cellular nucleosomes and immobilizes the host immune danger signal HMGB1 on chromatin. In turn, prevents HMGB1 release out of the cell and thus decreases inflammation. Also plays a role in the wrapping and condensation of the viral DNA. May also promote viral genome import into the nucleus. This chain is Pre-histone-like nucleoprotein, found in Canine adenovirus serotype 1 (strain CLL) (CAdV-1).